The chain runs to 85 residues: UPF0291 protein SGO_0570 (85 aa).

Residues 56 to 85 (EDGNDVTPEKLRQVQREKGLHGRSLDDPNS) are disordered. A compositionally biased stretch (basic and acidic residues) spans 62–85 (TPEKLRQVQREKGLHGRSLDDPNS).

This sequence belongs to the UPF0291 family.

The protein resides in the cytoplasm. The chain is UPF0291 protein SGO_0570 from Streptococcus gordonii (strain Challis / ATCC 35105 / BCRC 15272 / CH1 / DL1 / V288).